The chain runs to 273 residues: Dermonecrotic toxin LdSicTox-alphaIB1aiv (273 aa).

His5 is a catalytic residue. Positions 25 and 27 each coordinate Mg(2+). His41 (nucleophile) is an active-site residue. 2 disulfides stabilise this stretch: Cys45–Cys51 and Cys47–Cys190. Asp85 is a binding site for Mg(2+). N-linked (GlcNAc...) asparagine glycosylation is present at Asn250.

This sequence belongs to the arthropod phospholipase D family. Class II subfamily. Mg(2+) is required as a cofactor. Expressed by the venom gland.

The protein resides in the secreted. The enzyme catalyses an N-(acyl)-sphingosylphosphocholine = an N-(acyl)-sphingosyl-1,3-cyclic phosphate + choline. It carries out the reaction an N-(acyl)-sphingosylphosphoethanolamine = an N-(acyl)-sphingosyl-1,3-cyclic phosphate + ethanolamine. The catalysed reaction is a 1-acyl-sn-glycero-3-phosphocholine = a 1-acyl-sn-glycero-2,3-cyclic phosphate + choline. It catalyses the reaction a 1-acyl-sn-glycero-3-phosphoethanolamine = a 1-acyl-sn-glycero-2,3-cyclic phosphate + ethanolamine. Functionally, dermonecrotic toxins cleave the phosphodiester linkage between the phosphate and headgroup of certain phospholipids (sphingolipid and lysolipid substrates), forming an alcohol (often choline) and a cyclic phosphate. This toxin acts on sphingomyelin (SM). It may also act on ceramide phosphoethanolamine (CPE), lysophosphatidylcholine (LPC) and lysophosphatidylethanolamine (LPE), but not on lysophosphatidylserine (LPS), and lysophosphatidylglycerol (LPG). It acts by transphosphatidylation, releasing exclusively cyclic phosphate products as second products. Induces dermonecrosis, hemolysis, increased vascular permeability, edema, inflammatory response, and platelet aggregation. The chain is Dermonecrotic toxin LdSicTox-alphaIB1aiv from Loxosceles deserta (Desert recluse spider).